The chain runs to 373 residues: Indole glucosinolate O-methyltransferase 3 (373 aa).

S-adenosyl-L-homocysteine contacts are provided by G217, D240, D260, M261, and K274. H278 acts as the Proton acceptor in catalysis.

This sequence belongs to the class I-like SAM-binding methyltransferase superfamily. Cation-independent O-methyltransferase family.

Its pathway is secondary metabolite biosynthesis. Functionally, involved in indole glucosinolate biosynthesis. Catalyzes methoxylation reactions of the glucosinolate indole ring. Converts the hydroxy intermediates 4-hydroxy-indol-3-yl-methylglucosinolate (4OH-I3M) and 1-hydroxy-indol-3-yl-methylglucosinolate (1OH-I3M) to 4-methoxy-indol-3-yl-methylglucosinolate (4MO-I3M) and 1-methoxy-indol-3-yl-methylglucosinolate(1MO-I3M), respectively. The sequence is that of Indole glucosinolate O-methyltransferase 3 from Arabidopsis thaliana (Mouse-ear cress).